Reading from the N-terminus, the 372-residue chain is Probable O-methyltransferase 2 (372 aa).

Gly216, Asp259, and Lys273 together coordinate S-adenosyl-L-methionine. The Proton acceptor role is filled by His277.

The protein belongs to the class I-like SAM-binding methyltransferase superfamily. Cation-independent O-methyltransferase family. COMT subfamily. In terms of assembly, homodimer. Expressed predominantly in root hairs.

In terms of biological role, O-methyltransferase of unknown substrate specificity. Not active on resorcinol, orcinol, guaiacol, eugenol, ferulic acid, p-coumaric acid, catechol, caffeic acid or monomethyl ethers of resorcinol or orcinol. This chain is Probable O-methyltransferase 2 (OMT2), found in Sorghum bicolor (Sorghum).